The chain runs to 425 residues: Enolase (425 aa).

Residue glutamine 162 coordinates (2R)-2-phosphoglycerate. Catalysis depends on glutamate 204, which acts as the Proton donor. Mg(2+) is bound by residues aspartate 241, glutamate 284, and aspartate 311. Residues lysine 336, arginine 365, serine 366, and lysine 387 each coordinate (2R)-2-phosphoglycerate. The active-site Proton acceptor is the lysine 336.

The protein belongs to the enolase family. Mg(2+) serves as cofactor.

It localises to the cytoplasm. It is found in the secreted. The protein resides in the cell surface. It catalyses the reaction (2R)-2-phosphoglycerate = phosphoenolpyruvate + H2O. It functions in the pathway carbohydrate degradation; glycolysis; pyruvate from D-glyceraldehyde 3-phosphate: step 4/5. Catalyzes the reversible conversion of 2-phosphoglycerate (2-PG) into phosphoenolpyruvate (PEP). It is essential for the degradation of carbohydrates via glycolysis. The polypeptide is Enolase (Brucella anthropi (strain ATCC 49188 / DSM 6882 / CCUG 24695 / JCM 21032 / LMG 3331 / NBRC 15819 / NCTC 12168 / Alc 37) (Ochrobactrum anthropi)).